A 147-amino-acid polypeptide reads, in one-letter code: MIRRRKKVRKLRGSHTHGWGCKKKHRGGGSKGGRGMAGTGKRNKSKWTWTIKYAPDHLGKRGFSRPPEVQREVRVVNLKFIDEHLDELMQMGIAYEEGGKIIVDVTQFADKVLGTGKLTRPLVIKARAFSPKAEEKIKAAGGEAVLV.

The segment covering 1–28 (MIRRRKKVRKLRGSHTHGWGCKKKHRGG) has biased composition (basic residues). The segment at 1-43 (MIRRRKKVRKLRGSHTHGWGCKKKHRGGGSKGGRGMAGTGKRN) is disordered. Residues 29 to 38 (GSKGGRGMAG) show a composition bias toward gly residues.

Belongs to the universal ribosomal protein uL15 family. As to quaternary structure, part of the 50S ribosomal subunit.

In terms of biological role, binds to the 23S rRNA. This is Large ribosomal subunit protein uL15 from Pyrococcus furiosus (strain ATCC 43587 / DSM 3638 / JCM 8422 / Vc1).